We begin with the raw amino-acid sequence, 166 residues long: Endoribonuclease YbeY (166 aa).

3 residues coordinate Zn(2+): His130, His134, and His140.

It belongs to the endoribonuclease YbeY family. Zn(2+) serves as cofactor.

The protein resides in the cytoplasm. In terms of biological role, single strand-specific metallo-endoribonuclease involved in late-stage 70S ribosome quality control and in maturation of the 3' terminus of the 16S rRNA. The chain is Endoribonuclease YbeY from Streptococcus uberis (strain ATCC BAA-854 / 0140J).